Consider the following 143-residue polypeptide: Large ribosomal subunit protein uL15 (143 aa).

Positions 1 to 59 are disordered; the sequence is MELNGIKPSLGAKHAKRRVGRGIGSGLGKTAGRGHKGQKSRAGGYHKVGFEGGQMPMQR. The segment covering 21 to 31 has biased composition (gly residues); that stretch reads RGIGSGLGKTA.

Belongs to the universal ribosomal protein uL15 family. Part of the 50S ribosomal subunit.

In terms of biological role, binds to the 23S rRNA. The sequence is that of Large ribosomal subunit protein uL15 from Polaromonas sp. (strain JS666 / ATCC BAA-500).